The following is a 729-amino-acid chain: Fatty acid oxidation complex subunit alpha (729 aa).

An enoyl-CoA hydratase/isomerase region spans residues 1–189 (MLYKGDTLYL…KIGLVDGVVK (189 aa)). D296 contacts substrate. The interval 311-729 (ETPKQAAVLG…ARPVGSLKTA (419 aa)) is 3-hydroxyacyl-CoA dehydrogenase. NAD(+) contacts are provided by residues M324, D343, 400–402 (VVE), K407, and S429. H450 (for 3-hydroxyacyl-CoA dehydrogenase activity) is an active-site residue. Residue N453 participates in NAD(+) binding. The substrate site is built by N500 and Y660. The disordered stretch occupies residues 708-729 (RHNEPYYPPVEPARPVGSLKTA).

The protein in the N-terminal section; belongs to the enoyl-CoA hydratase/isomerase family. In the C-terminal section; belongs to the 3-hydroxyacyl-CoA dehydrogenase family. In terms of assembly, heterotetramer of two alpha chains (FadB) and two beta chains (FadA).

The catalysed reaction is a (3S)-3-hydroxyacyl-CoA + NAD(+) = a 3-oxoacyl-CoA + NADH + H(+). It carries out the reaction a (3S)-3-hydroxyacyl-CoA = a (2E)-enoyl-CoA + H2O. The enzyme catalyses a 4-saturated-(3S)-3-hydroxyacyl-CoA = a (3E)-enoyl-CoA + H2O. It catalyses the reaction (3S)-3-hydroxybutanoyl-CoA = (3R)-3-hydroxybutanoyl-CoA. The catalysed reaction is a (3Z)-enoyl-CoA = a 4-saturated (2E)-enoyl-CoA. It carries out the reaction a (3E)-enoyl-CoA = a 4-saturated (2E)-enoyl-CoA. The protein operates within lipid metabolism; fatty acid beta-oxidation. Functionally, involved in the aerobic and anaerobic degradation of long-chain fatty acids via beta-oxidation cycle. Catalyzes the formation of 3-oxoacyl-CoA from enoyl-CoA via L-3-hydroxyacyl-CoA. It can also use D-3-hydroxyacyl-CoA and cis-3-enoyl-CoA as substrate. The chain is Fatty acid oxidation complex subunit alpha from Salmonella agona (strain SL483).